Consider the following 87-residue polypeptide: DNA-directed RNA polymerase subunit omega (87 aa).

It belongs to the RNA polymerase subunit omega family. In terms of assembly, the RNAP catalytic core consists of 2 alpha, 1 beta, 1 beta' and 1 omega subunit. When a sigma factor is associated with the core the holoenzyme is formed, which can initiate transcription.

It catalyses the reaction RNA(n) + a ribonucleoside 5'-triphosphate = RNA(n+1) + diphosphate. In terms of biological role, promotes RNA polymerase assembly. Latches the N- and C-terminal regions of the beta' subunit thereby facilitating its interaction with the beta and alpha subunits. The protein is DNA-directed RNA polymerase subunit omega of Pseudomonas savastanoi pv. phaseolicola (strain 1448A / Race 6) (Pseudomonas syringae pv. phaseolicola (strain 1448A / Race 6)).